We begin with the raw amino-acid sequence, 285 residues long: (2Z,6Z)-farnesyl diphosphate synthase CPT6, chloroplastic (285 aa).

The transit peptide at 1 to 30 directs the protein to the chloroplast; that stretch reads MNSLFVGRPIVKSSYNVYTLPSSICGGHFF. The active site involves aspartate 65.

This sequence belongs to the UPP synthase family. Mg(2+) is required as a cofactor. Expressed in roots and red fruits.

It localises to the plastid. The protein resides in the chloroplast. It carries out the reaction 2 isopentenyl diphosphate + dimethylallyl diphosphate = (2Z,6Z)-farnesyl diphosphate + 2 diphosphate. The catalysed reaction is isopentenyl diphosphate + dimethylallyl diphosphate = neryl diphosphate + diphosphate. The enzyme catalyses neryl diphosphate + isopentenyl diphosphate = (2Z,6Z)-farnesyl diphosphate + diphosphate. Its function is as follows. Uses neryl diphosphate to catalyze the cis-prenyl chain elongation and produce the 15 carbon product (2Z,6Z)-farnesyl diphosphate. In Solanum lycopersicum (Tomato), this protein is (2Z,6Z)-farnesyl diphosphate synthase CPT6, chloroplastic.